The following is a 640-amino-acid chain: Replication protein A 70 kDa DNA-binding subunit A (640 aa).

A DNA-binding region (OB) is located at residues 211 to 293 (AIKARVTAKG…NHLKNEWEIF (83 aa)). A C4-type zinc finger spans residues 503–529 (CPLMIGDKQCNKKVTRSGTNRWLCDRC).

Belongs to the replication factor A protein 1 family. Heterotrimer of RPA1, RPA2 and RPA3 (canonical replication protein A complex). Interacts with RPA2A. Expressed in roots, leaves, stalks and flower buds.

Its subcellular location is the nucleus. Its function is as follows. Component of the replication protein A complex (RPA) required for DNA recombination, repair and replication. The activity of RPA is mediated by single-stranded DNA binding and protein interactions. Plays an essential role at later stages of meiotic recombination events required for the formation of class I crossovers. Is essential for normal progression through meiosis in pollen mother cells. Is involved in repair of double-strand DNA breaks (DSBs) induced by genotoxic stresses, but does not seem to be required for the repair of meiotic DSBs. The sequence is that of Replication protein A 70 kDa DNA-binding subunit A (RPA1A) from Arabidopsis thaliana (Mouse-ear cress).